The following is a 121-amino-acid chain: Large ribosomal subunit protein bL12 (121 aa).

Belongs to the bacterial ribosomal protein bL12 family. As to quaternary structure, homodimer. Part of the ribosomal stalk of the 50S ribosomal subunit. Forms a multimeric L10(L12)X complex, where L10 forms an elongated spine to which 2 to 4 L12 dimers bind in a sequential fashion. Binds GTP-bound translation factors.

Forms part of the ribosomal stalk which helps the ribosome interact with GTP-bound translation factors. Is thus essential for accurate translation. This Oenococcus oeni (strain ATCC BAA-331 / PSU-1) protein is Large ribosomal subunit protein bL12.